We begin with the raw amino-acid sequence, 142 residues long: Peptide methionine sulfoxide reductase MsrB (142 aa).

Residues 3–126 form the MsrB domain; sequence KEKLKKKLSL…NSAALRFVPF (124 aa). The active-site Nucleophile is the Cys-115.

The protein belongs to the MsrB Met sulfoxide reductase family.

The catalysed reaction is L-methionyl-[protein] + [thioredoxin]-disulfide + H2O = L-methionyl-(R)-S-oxide-[protein] + [thioredoxin]-dithiol. The protein is Peptide methionine sulfoxide reductase MsrB of Lactococcus lactis subsp. lactis (strain IL1403) (Streptococcus lactis).